We begin with the raw amino-acid sequence, 875 residues long: Alanine--tRNA ligase (875 aa).

Residues H567, H571, C669, and H673 each contribute to the Zn(2+) site.

This sequence belongs to the class-II aminoacyl-tRNA synthetase family. It depends on Zn(2+) as a cofactor.

It is found in the cytoplasm. It carries out the reaction tRNA(Ala) + L-alanine + ATP = L-alanyl-tRNA(Ala) + AMP + diphosphate. Catalyzes the attachment of alanine to tRNA(Ala) in a two-step reaction: alanine is first activated by ATP to form Ala-AMP and then transferred to the acceptor end of tRNA(Ala). Also edits incorrectly charged Ser-tRNA(Ala) and Gly-tRNA(Ala) via its editing domain. The polypeptide is Alanine--tRNA ligase (Geobacter sulfurreducens (strain ATCC 51573 / DSM 12127 / PCA)).